An 83-amino-acid chain; its full sequence is Large ribosomal subunit protein bL27 (83 aa).

Positions 1–20 (MAHKKGASSSRNGRDSNPQY) are disordered. The segment covering 7–19 (ASSSRNGRDSNPQ) has biased composition (polar residues).

Belongs to the bacterial ribosomal protein bL27 family.

This is Large ribosomal subunit protein bL27 from Bifidobacterium animalis subsp. lactis (strain AD011).